The chain runs to 495 residues: Probable staphylococcal-like nuclease CAN4 (495 aa).

The N-myristoyl glycine moiety is linked to residue G2. C11 carries the S-palmitoyl cysteine lipid modification. 2 disordered regions span residues D45–L68 and L81–P101. Pro residues predominate over residues L50 to P66. The TNase-like domain occupies K297–Y470. D310 contributes to the Ca(2+) binding site. R377 is an active-site residue. D382 is a Ca(2+) binding site. Active-site residues include E385 and R419.

This sequence belongs to the thermonuclease family. Ca(2+) is required as a cofactor.

The protein resides in the cell membrane. Enzyme that catalyzes the hydrolysis of both DNA and RNA at the 5' position of the phosphodiester bond. The chain is Probable staphylococcal-like nuclease CAN4 from Oryza sativa subsp. japonica (Rice).